A 353-amino-acid chain; its full sequence is MTIAIGKSSKEPKGLFDSMDDWLRRDRFVFVGWSGLLLFPCAYFSLGGWFTGTTFVTSWYTHGLASSYLEGCNFLTAAVSTPANSLAHSLLLLWGPEAQGDFTRWCQLGGLWTFVALHGAFALIGFMLRQFELARSVQLRPYNAIAFSGPIAVFVSVFLIYPLGQSGWFFAPSFGVAAIFRFILFFQGFHNWTLNPFHMMGVAGVLGAALLCAIHGATVENTLFEDGDGANTFRAFNPTQSEETYSMVTANRFWSQIFGVAFSNKRWLHFFMLFVPVTGLWMSAIGVVGLALNLRAYDFVSQEIRAAEDPEFETFYTKNILLNEGIRAWMAAQDQPHENLVFPEEVLPRGNAL.

Thr2 is modified (N-acetylthreonine). The residue at position 2 (Thr2) is a Phosphothreonine. Residues 41-61 form a helical membrane-spanning segment; it reads CAYFSLGGWFTGTTFVTSWYT. His118 is a binding site for chlorophyll a. A helical transmembrane segment spans residues 125–141; that stretch reads GFMLRQFELARSVQLRP. 2 residues coordinate pheophytin a: Gln130 and Asn143. The chain crosses the membrane as a helical span at residues 153–166; the sequence is VFVSVFLIYPLGQS. His198 is a chlorophyll a binding site. Residues 208–228 form a helical membrane-spanning segment; sequence AALLCAIHGATVENTLFEDGD. A plastoquinone contacts are provided by His215 and Phe262. His215 provides a ligand contact to Fe cation. Fe cation is bound at residue His269. A helical membrane pass occupies residues 279 to 295; it reads GLWMSAIGVVGLALNLR.

It belongs to the reaction center PufL/M/PsbA/D family. In terms of assembly, PSII is composed of 1 copy each of membrane proteins PsbA, PsbB, PsbC, PsbD, PsbE, PsbF, PsbH, PsbI, PsbJ, PsbK, PsbL, PsbM, PsbT, PsbX, PsbY, PsbZ, Psb30/Ycf12, at least 3 peripheral proteins of the oxygen-evolving complex and a large number of cofactors. It forms dimeric complexes. It depends on The D1/D2 heterodimer binds P680, chlorophylls that are the primary electron donor of PSII, and subsequent electron acceptors. It shares a non-heme iron and each subunit binds pheophytin, quinone, additional chlorophylls, carotenoids and lipids. There is also a Cl(-1) ion associated with D1 and D2, which is required for oxygen evolution. The PSII complex binds additional chlorophylls, carotenoids and specific lipids. as a cofactor.

The protein localises to the plastid. Its subcellular location is the chloroplast thylakoid membrane. It catalyses the reaction 2 a plastoquinone + 4 hnu + 2 H2O = 2 a plastoquinol + O2. Its function is as follows. Photosystem II (PSII) is a light-driven water:plastoquinone oxidoreductase that uses light energy to abstract electrons from H(2)O, generating O(2) and a proton gradient subsequently used for ATP formation. It consists of a core antenna complex that captures photons, and an electron transfer chain that converts photonic excitation into a charge separation. The D1/D2 (PsbA/PsbD) reaction center heterodimer binds P680, the primary electron donor of PSII as well as several subsequent electron acceptors. D2 is needed for assembly of a stable PSII complex. The polypeptide is Photosystem II D2 protein (Physcomitrium patens (Spreading-leaved earth moss)).